Reading from the N-terminus, the 187-residue chain is Elongation factor P (187 aa).

The protein belongs to the elongation factor P family.

Its subcellular location is the cytoplasm. It functions in the pathway protein biosynthesis; polypeptide chain elongation. Its function is as follows. Involved in peptide bond synthesis. Stimulates efficient translation and peptide-bond synthesis on native or reconstituted 70S ribosomes in vitro. Probably functions indirectly by altering the affinity of the ribosome for aminoacyl-tRNA, thus increasing their reactivity as acceptors for peptidyl transferase. This chain is Elongation factor P, found in Helicobacter hepaticus (strain ATCC 51449 / 3B1).